The sequence spans 504 residues: Probable protein phosphatase 2C 18 (504 aa).

The interval M1–I49 is disordered. Over residues E17 to E26 the composition is skewed to low complexity. The region spanning I67–L399 is the PPM-type phosphatase domain. D103, G104, D344, and D390 together coordinate Mn(2+). The tract at residues T410–E435 is disordered. Basic and acidic residues predominate over residues V412–S421.

This sequence belongs to the PP2C family. Mg(2+) serves as cofactor. It depends on Mn(2+) as a cofactor.

It carries out the reaction O-phospho-L-seryl-[protein] + H2O = L-seryl-[protein] + phosphate. It catalyses the reaction O-phospho-L-threonyl-[protein] + H2O = L-threonyl-[protein] + phosphate. The sequence is that of Probable protein phosphatase 2C 18 from Arabidopsis thaliana (Mouse-ear cress).